The sequence spans 204 residues: Holliday junction branch migration complex subunit RuvA (204 aa).

The tract at residues 1-64 (MISRMKGIIL…EDAQLLYGFH (64 aa)) is domain I. Residues 65-143 (HPKERAMFSE…NLNKNLFKST (79 aa)) are domain II. The flexible linker stretch occupies residues 144-155 (ADHMLSSVSTDL). The interval 156 to 204 (SAKSAEAEAISALISLGYKPQEAAQLIKNIAQPDLDSQALIKHALRSTL) is domain III.

Belongs to the RuvA family. As to quaternary structure, homotetramer. Forms an RuvA(8)-RuvB(12)-Holliday junction (HJ) complex. HJ DNA is sandwiched between 2 RuvA tetramers; dsDNA enters through RuvA and exits via RuvB. An RuvB hexamer assembles on each DNA strand where it exits the tetramer. Each RuvB hexamer is contacted by two RuvA subunits (via domain III) on 2 adjacent RuvB subunits; this complex drives branch migration. In the full resolvosome a probable DNA-RuvA(4)-RuvB(12)-RuvC(2) complex forms which resolves the HJ.

The protein localises to the cytoplasm. The RuvA-RuvB-RuvC complex processes Holliday junction (HJ) DNA during genetic recombination and DNA repair, while the RuvA-RuvB complex plays an important role in the rescue of blocked DNA replication forks via replication fork reversal (RFR). RuvA specifically binds to HJ cruciform DNA, conferring on it an open structure. The RuvB hexamer acts as an ATP-dependent pump, pulling dsDNA into and through the RuvAB complex. HJ branch migration allows RuvC to scan DNA until it finds its consensus sequence, where it cleaves and resolves the cruciform DNA. In Hamiltonella defensa subsp. Acyrthosiphon pisum (strain 5AT), this protein is Holliday junction branch migration complex subunit RuvA.